The following is a 778-amino-acid chain: E3 UFM1-protein ligase 1 homolog (778 aa).

Residues 404–477 (NNLSTSHDAD…TVQQSAGNTR (74 aa)) form a disordered region. Residues 445–457 (KSTKKHQRGRAAA) show a composition bias toward basic residues.

This sequence belongs to the UFL1 family.

Functionally, E3 UFM1-protein ligase that mediates ufmylation of target proteins. The chain is E3 UFM1-protein ligase 1 homolog from Drosophila virilis (Fruit fly).